The sequence spans 220 residues: MDSASQDINLNSPNKGVLSDFMTDVPVDPGVVHRTPAVEGLTEVEEEELRAELAKVEEEIVTLRQVLAAKERHCGELKRRLGLSTLGELKQNLSRSWHDVQGSTAYVKTSEKLGEWNEKVTQSDLYKKTQETLSQAGQKTSAALSTMGSAISRKLGDMSSYSIRHSISMPVMRNSATFKSFEDRVGTIKSKVVGGRENGSDTLPSSPGSGDQTLPDHAPF.

Met-1 carries the N-acetylmethionine modification. The segment covering 1–14 has biased composition (polar residues); that stretch reads MDSASQDINLNSPN. The segment at 1-26 is disordered; the sequence is MDSASQDINLNSPNKGVLSDFMTDVP. A phosphoserine mark is found at Ser-3, Ser-12, and Ser-19. A coiled-coil region spans residues 40 to 82; that stretch reads GLTEVEEEELRAELAKVEEEIVTLRQVLAAKERHCGELKRRLG. Phosphoserine occurs at positions 96, 149, 168, and 175. At Thr-177 the chain carries Phosphothreonine. At Ser-180 the chain carries Phosphoserine. The residue at position 187 (Thr-187) is a Phosphothreonine. Positions 189–220 are disordered; that stretch reads KSKVVGGRENGSDTLPSSPGSGDQTLPDHAPF. Residues 200-212 are compositionally biased toward polar residues; that stretch reads SDTLPSSPGSGDQ. 2 positions are modified to phosphoserine: Ser-206 and Ser-209.

This sequence belongs to the TPD52 family. In terms of assembly, forms a homodimer or heterodimer with other members of the family. Interacts with MAL2.

This chain is Tumor protein D54 (Tpd52l2), found in Rattus norvegicus (Rat).